The following is a 406-amino-acid chain: Vacuole membrane protein 1 (406 aa).

Over residues 1–20 (MAENGKNCDQRRVAMNKEQH) the composition is skewed to basic and acidic residues. The tract at residues 1–36 (MAENGKNCDQRRVAMNKEQHNGNFTDPSSVNEKKRR) is disordered. Position 2 is an N-acetylalanine (A2). Topologically, residues 2–43 (AENGKNCDQRRVAMNKEQHNGNFTDPSSVNEKKRREREERQN) are cytoplasmic. Positions 21 to 30 (NGNFTDPSSV) are enriched in polar residues. A helical transmembrane segment spans residues 44–64 (IVLWRQPLITLQYFSLEILVI). The Extracellular segment spans residues 65–77 (LKEWTSKLWHRQS). Residues 78 to 98 (IVVSFLLLLAVLIATYYVEGA) traverse the membrane as a helical segment. Residues 99–109 (HQQYVQRIEKQ) are Cytoplasmic-facing. Residues 110 to 130 (FLLYAYWIGLGILSSVGLGTG) form a helical membrane-spanning segment. The Extracellular segment spans residues 131–250 (LHTFLLYLGP…ASRAKLAVQK (120 aa)). Positions 173-316 (GTEGTISLWS…FVIITFSKHI (144 aa)) are VTT domain. A helical membrane pass occupies residues 251–271 (LVQKVGFFGILACASIPNPLF). The Cytoplasmic segment spans residues 272-273 (DL). A helical transmembrane segment spans residues 274 to 294 (AGITCGHFLVPFWTFFGATLI). Residues 295–305 (GKAIIKMHIQK) lie on the Extracellular side of the membrane. The helical transmembrane segment at 306–326 (IFVIITFSKHIVEQMVAFIGA) threads the bilayer. Topologically, residues 327 to 363 (VPGIGPSLQKPFQEYLEAQRQKLHHKSEMGTPQGENW) are cytoplasmic. A helical transmembrane segment spans residues 364 to 384 (LSWMFEKLVVVMVCYFILSII). Residues 385-406 (NSMAQSYAKRIQQRLNSEEKTK) are Extracellular-facing.

It belongs to the VMP1 family. As to quaternary structure, interacts with BECN1. Interacts with TJP1. Interacts with TP53INP2. Interacts with TMEM41B. Interacts with ATP2A2, PLN and SLN; competes with PLN and SLN to prevent them from forming an inhibitory complex with ATP2A2. Interacts with ATG2A.

It is found in the endoplasmic reticulum-Golgi intermediate compartment membrane. Its subcellular location is the cell membrane. The protein resides in the vacuole membrane. The protein localises to the endoplasmic reticulum membrane. The enzyme catalyses a 1,2-diacyl-sn-glycero-3-phospho-L-serine(in) = a 1,2-diacyl-sn-glycero-3-phospho-L-serine(out). It carries out the reaction cholesterol(in) = cholesterol(out). The catalysed reaction is a 1,2-diacyl-sn-glycero-3-phosphocholine(in) = a 1,2-diacyl-sn-glycero-3-phosphocholine(out). It catalyses the reaction a 1,2-diacyl-sn-glycero-3-phosphoethanolamine(in) = a 1,2-diacyl-sn-glycero-3-phosphoethanolamine(out). Its function is as follows. Phospholipid scramblase involved in lipid homeostasis and membrane dynamics processes. Has phospholipid scramblase activity toward cholesterol and phosphatidylserine, as well as phosphatidylethanolamine and phosphatidylcholine. Required for autophagosome formation: participates in early stages of autophagosome biogenesis at the endoplasmic reticulum (ER) membrane by reequilibrating the leaflets of the ER as lipids are extracted by ATG2 (ATG2A or ATG2B) to mediate autophagosome assembly. Regulates ATP2A2 activity to control ER-isolation membrane contacts for autophagosome formation. In addition to autophagy, involved in other processes in which phospholipid scramblase activity is required. Modulates ER contacts with lipid droplets, mitochondria and endosomes. Plays an essential role in formation of cell junctions. Upon stress such as bacterial and viral infection, promotes formation of cytoplasmic vacuoles followed by cell death. Involved in the cytoplasmic vacuolization of acinar cells during the early stage of acute pancreatitis. In Pongo abelii (Sumatran orangutan), this protein is Vacuole membrane protein 1.